We begin with the raw amino-acid sequence, 448 residues long: Tubulin beta-1 chain (448 aa).

Gln11, Glu69, Ser138, Gly142, Thr143, Gly144, Asn204, and Asn226 together coordinate GTP. Residue Glu69 participates in Mg(2+) binding. Residues 427-448 (DATADEEGDLQEGESEYIEQEE) are disordered. A compositionally biased stretch (acidic residues) spans 429–448 (TADEEGDLQEGESEYIEQEE).

This sequence belongs to the tubulin family. In terms of assembly, dimer of alpha and beta chains. A typical microtubule is a hollow water-filled tube with an outer diameter of 25 nm and an inner diameter of 15 nM. Alpha-beta heterodimers associate head-to-tail to form protofilaments running lengthwise along the microtubule wall with the beta-tubulin subunit facing the microtubule plus end conferring a structural polarity. Microtubules usually have 13 protofilaments but different protofilament numbers can be found in some organisms and specialized cells. Mg(2+) serves as cofactor.

The protein localises to the cytoplasm. Its subcellular location is the cytoskeleton. Functionally, tubulin is the major constituent of microtubules, a cylinder consisting of laterally associated linear protofilaments composed of alpha- and beta-tubulin heterodimers. Microtubules grow by the addition of GTP-tubulin dimers to the microtubule end, where a stabilizing cap forms. Below the cap, tubulin dimers are in GDP-bound state, owing to GTPase activity of alpha-tubulin. The polypeptide is Tubulin beta-1 chain (Brugia pahangi (Filarial nematode worm)).